The sequence spans 387 residues: Killer cell lectin-like receptor subfamily G member 2 (387 aa).

Residues 1-105 (MEPPQVPAEA…SGEPAPASWA (105 aa)) form a disordered region. Positions 15-27 (ASEDSPRPERTGW) are enriched in basic and acidic residues. Ser143 is subject to Phosphoserine. Residues 155-174 (QWLPRAPSPGSTWSRGSPLA) are disordered. The helical transmembrane segment at 241 to 261 (WALVVMAVLLAVCTVAVVALA) threads the bilayer. Positions 278 to 383 (SQEQCYYLSE…CSSPRPWVCA (106 aa)) constitute a C-type lectin domain. Cystine bridges form between Cys299/Cys382 and Cys361/Cys374.

Its subcellular location is the membrane. The chain is Killer cell lectin-like receptor subfamily G member 2 (Klrg2) from Mus musculus (Mouse).